The chain runs to 430 residues: Adenylosuccinate synthetase (430 aa).

Residues 13 to 19 (GDEGKGK) and 41 to 43 (GHT) contribute to the GTP site. D14 (proton acceptor) is an active-site residue. Mg(2+) contacts are provided by D14 and G41. Residues 14–17 (DEGK), 39–42 (NAGH), T130, R144, Q225, T240, and R304 each bind IMP. H42 functions as the Proton donor in the catalytic mechanism. Position 300 to 306 (300 to 306 (ATTGRKR)) interacts with substrate. Residues R306, 332 to 334 (KLD), and 414 to 416 (STG) each bind GTP.

The protein belongs to the adenylosuccinate synthetase family. As to quaternary structure, homodimer. It depends on Mg(2+) as a cofactor.

The protein localises to the cytoplasm. The enzyme catalyses IMP + L-aspartate + GTP = N(6)-(1,2-dicarboxyethyl)-AMP + GDP + phosphate + 2 H(+). It functions in the pathway purine metabolism; AMP biosynthesis via de novo pathway; AMP from IMP: step 1/2. In terms of biological role, plays an important role in the de novo pathway of purine nucleotide biosynthesis. Catalyzes the first committed step in the biosynthesis of AMP from IMP. This is Adenylosuccinate synthetase from Teredinibacter turnerae (strain ATCC 39867 / T7901).